A 149-amino-acid polypeptide reads, in one-letter code: MSKTLSFKTYSAKPAEVERKWYVIDAEDQILGRMAAEIAKVLRGKHKPQFTPHIDTGDFIVVTNAEKVALSGKKIEYKTYFHHSNYPGGGKFDHVKDLLKKKPEKVIEHAVWGMLPHNNLGRQLFKKLKVYAGSEHPHTAQCPVELKVN.

The protein belongs to the universal ribosomal protein uL13 family. Part of the 50S ribosomal subunit.

Its function is as follows. This protein is one of the early assembly proteins of the 50S ribosomal subunit, although it is not seen to bind rRNA by itself. It is important during the early stages of 50S assembly. This chain is Large ribosomal subunit protein uL13, found in Chlorobium limicola (strain DSM 245 / NBRC 103803 / 6330).